We begin with the raw amino-acid sequence, 151 residues long: 4-hydroxybenzoyl-CoA thioesterase (151 aa).

The active site involves Glu-73. Substrate is bound at residue 100 to 102 (FFR).

It belongs to the thioesterase PaaI family. Homotetramer.

It catalyses the reaction 4-hydroxybenzoyl-CoA + H2O = 4-hydroxybenzoate + CoA + H(+). Its pathway is xenobiotic degradation; 4-chlorobenzoate degradation; 4-hydroxybenzoate from 4-chlorobenzoate: step 3/3. This is 4-hydroxybenzoyl-CoA thioesterase from Arthrobacter globiformis.